The primary structure comprises 203 residues: SPbeta prophage-derived uncharacterized protein YouA (203 aa).

The segment at 1-23 (MAFLNQDGDKYTSAKDDGTGNPI) is disordered. The segment covering 7-18 (DGDKYTSAKDDG) has biased composition (basic and acidic residues).

This is SPbeta prophage-derived uncharacterized protein YouA (youA) from Bacillus subtilis (strain 168).